A 146-amino-acid chain; its full sequence is Hemoglobin subunit beta (146 aa).

Val-1 carries the N-acetylvaline modification. The region spanning 2 to 146 is the Globin domain; the sequence is HLSGEEKAAV…VANALAHKYH (145 aa). Phosphothreonine is present on Thr-12. Ser-44 bears the Phosphoserine mark. N6-acetyllysine is present on Lys-59. Residue His-63 participates in heme b binding. N6-acetyllysine is present on Lys-82. A heme b-binding site is contributed by His-92. An S-nitrosocysteine modification is found at Cys-93. Position 144 is an N6-acetyllysine (Lys-144).

It belongs to the globin family. As to quaternary structure, heterotetramer of two alpha chains and two beta chains. In terms of tissue distribution, red blood cells.

Functionally, involved in oxygen transport from the lung to the various peripheral tissues. The sequence is that of Hemoglobin subunit beta (HBB) from Pteropus alecto (Black flying fox).